Here is a 585-residue protein sequence, read N- to C-terminus: A-type ATP synthase subunit A (585 aa).

231–238 (GPFGSGKT) contacts ATP.

It belongs to the ATPase alpha/beta chains family. Has multiple subunits with at least A(3), B(3), C, D, E, F, H, I and proteolipid K(x).

Its subcellular location is the cell membrane. It carries out the reaction ATP + H2O + 4 H(+)(in) = ADP + phosphate + 5 H(+)(out). Functionally, produces ATP from ADP in the presence of a proton gradient across the membrane. The archaeal alpha chain is a catalytic subunit. Component of the A-type ATP synthase that produces ATP from ADP in the presence of a proton gradient across the membrane. The A chain is the catalytic subunit. This chain is A-type ATP synthase subunit A, found in Thermococcus sp. (strain KI).